A 366-amino-acid chain; its full sequence is 3-isopropylmalate dehydrogenase (366 aa).

Position 76–89 (76–89 (GPKWDHNPASLRPE)) interacts with NAD(+). 4 residues coordinate substrate: R96, R106, R134, and D222. Residues D222, D246, and D250 each coordinate Mg(2+). 280–292 (GSAPDIAGQGKAN) lines the NAD(+) pocket.

This sequence belongs to the isocitrate and isopropylmalate dehydrogenases family. LeuB type 1 subfamily. As to quaternary structure, homodimer. Mg(2+) serves as cofactor. Requires Mn(2+) as cofactor.

It localises to the cytoplasm. The catalysed reaction is (2R,3S)-3-isopropylmalate + NAD(+) = 4-methyl-2-oxopentanoate + CO2 + NADH. The protein operates within amino-acid biosynthesis; L-leucine biosynthesis; L-leucine from 3-methyl-2-oxobutanoate: step 3/4. In terms of biological role, catalyzes the oxidation of 3-carboxy-2-hydroxy-4-methylpentanoate (3-isopropylmalate) to 3-carboxy-4-methyl-2-oxopentanoate. The product decarboxylates to 4-methyl-2 oxopentanoate. This chain is 3-isopropylmalate dehydrogenase (leuB), found in Heyndrickxia coagulans (Weizmannia coagulans).